Reading from the N-terminus, the 211-residue chain is Pyridoxine/pyridoxamine 5'-phosphate oxidase (211 aa).

Substrate contacts are provided by residues 7–10 (RREY) and lysine 65. Residues 60–65 (RIVLLK), 75–76 (YT), arginine 81, lysine 82, and glutamine 104 each bind FMN. Tyrosine 122, arginine 126, and serine 130 together coordinate substrate. FMN-binding positions include 139–140 (QS) and tryptophan 184. 190 to 192 (RLH) contacts substrate. Arginine 194 contacts FMN.

It belongs to the pyridoxamine 5'-phosphate oxidase family. Homodimer. FMN is required as a cofactor.

It catalyses the reaction pyridoxamine 5'-phosphate + O2 + H2O = pyridoxal 5'-phosphate + H2O2 + NH4(+). It carries out the reaction pyridoxine 5'-phosphate + O2 = pyridoxal 5'-phosphate + H2O2. The protein operates within cofactor metabolism; pyridoxal 5'-phosphate salvage; pyridoxal 5'-phosphate from pyridoxamine 5'-phosphate: step 1/1. It functions in the pathway cofactor metabolism; pyridoxal 5'-phosphate salvage; pyridoxal 5'-phosphate from pyridoxine 5'-phosphate: step 1/1. In terms of biological role, catalyzes the oxidation of either pyridoxine 5'-phosphate (PNP) or pyridoxamine 5'-phosphate (PMP) into pyridoxal 5'-phosphate (PLP). In Vibrio campbellii (strain ATCC BAA-1116), this protein is Pyridoxine/pyridoxamine 5'-phosphate oxidase.